Consider the following 413-residue polypeptide: PCI domain-containing protein 2 homolog (413 aa).

In terms of domain architecture, PCI spans 222–403 (VAYNYFLGRK…QKLVISKMNA (182 aa)).

The protein belongs to the CSN12 family.

The sequence is that of PCI domain-containing protein 2 homolog from Caenorhabditis elegans.